The primary structure comprises 217 residues: N-(5'-phosphoribosyl)anthranilate isomerase (217 aa).

The protein belongs to the TrpF family.

It catalyses the reaction N-(5-phospho-beta-D-ribosyl)anthranilate = 1-(2-carboxyphenylamino)-1-deoxy-D-ribulose 5-phosphate. It functions in the pathway amino-acid biosynthesis; L-tryptophan biosynthesis; L-tryptophan from chorismate: step 3/5. The protein is N-(5'-phosphoribosyl)anthranilate isomerase of Chlorobium phaeobacteroides (strain BS1).